The following is a 135-amino-acid chain: UPF0251 protein Hore_18270 (135 aa).

This sequence belongs to the UPF0251 family.

The sequence is that of UPF0251 protein Hore_18270 from Halothermothrix orenii (strain H 168 / OCM 544 / DSM 9562).